The following is a 373-amino-acid chain: Phospho-N-acetylmuramoyl-pentapeptide-transferase (373 aa).

Helical transmembrane passes span 34 to 54 (GALF…ISSL), 78 to 98 (TPTM…LLWA), 100 to 120 (LANV…AIGF), 141 to 161 (LGLE…TALS), 181 to 201 (FMLN…VSAG), 212 to 232 (GLAI…AYLA), 252 to 272 (LAVV…FNAP), 275 to 295 (AIFM…TVAV), 301 to 321 (IVMA…IIQV), and 350 to 370 (QVVV…LSTL).

The protein belongs to the glycosyltransferase 4 family. MraY subfamily. It depends on Mg(2+) as a cofactor.

It is found in the cell inner membrane. It carries out the reaction UDP-N-acetyl-alpha-D-muramoyl-L-alanyl-gamma-D-glutamyl-meso-2,6-diaminopimeloyl-D-alanyl-D-alanine + di-trans,octa-cis-undecaprenyl phosphate = di-trans,octa-cis-undecaprenyl diphospho-N-acetyl-alpha-D-muramoyl-L-alanyl-D-glutamyl-meso-2,6-diaminopimeloyl-D-alanyl-D-alanine + UMP. The protein operates within cell wall biogenesis; peptidoglycan biosynthesis. Its function is as follows. Catalyzes the initial step of the lipid cycle reactions in the biosynthesis of the cell wall peptidoglycan: transfers peptidoglycan precursor phospho-MurNAc-pentapeptide from UDP-MurNAc-pentapeptide onto the lipid carrier undecaprenyl phosphate, yielding undecaprenyl-pyrophosphoryl-MurNAc-pentapeptide, known as lipid I. The sequence is that of Phospho-N-acetylmuramoyl-pentapeptide-transferase from Rhizobium rhizogenes (strain K84 / ATCC BAA-868) (Agrobacterium radiobacter).